Reading from the N-terminus, the 222-residue chain is Urease accessory protein UreF (222 aa).

This sequence belongs to the UreF family. UreD, UreF and UreG form a complex that acts as a GTP-hydrolysis-dependent molecular chaperone, activating the urease apoprotein by helping to assemble the nickel containing metallocenter of UreC. The UreE protein probably delivers the nickel.

Its subcellular location is the cytoplasm. In terms of biological role, required for maturation of urease via the functional incorporation of the urease nickel metallocenter. This Roseobacter denitrificans (strain ATCC 33942 / OCh 114) (Erythrobacter sp. (strain OCh 114)) protein is Urease accessory protein UreF.